The primary structure comprises 152 residues: Deoxyuridine 5'-triphosphate nucleotidohydrolase (152 aa).

Substrate-binding positions include 71-73, N84, 88-90, and M98; these read RSG and LID.

This sequence belongs to the dUTPase family. It depends on Mg(2+) as a cofactor.

It catalyses the reaction dUTP + H2O = dUMP + diphosphate + H(+). It functions in the pathway pyrimidine metabolism; dUMP biosynthesis; dUMP from dCTP (dUTP route): step 2/2. Its function is as follows. This enzyme is involved in nucleotide metabolism: it produces dUMP, the immediate precursor of thymidine nucleotides and it decreases the intracellular concentration of dUTP so that uracil cannot be incorporated into DNA. The sequence is that of Deoxyuridine 5'-triphosphate nucleotidohydrolase from Erwinia tasmaniensis (strain DSM 17950 / CFBP 7177 / CIP 109463 / NCPPB 4357 / Et1/99).